A 295-amino-acid polypeptide reads, in one-letter code: MYTALLQSMNRLHPRAWDFIQLVRLDRPIGIYLLLWPTLWAVWIAADGSPSLKHVLIFTCGVILMRSAGCVINDFADRNFDGHVARTRQRPLATGRIRTREAWALFAVLVALSFGLVLLTDPFTVALSFGALAVASLYPFMKRYTHLPQLVLGAAYSWGIPMAFTAATGRLPLEAWLIFAANLAWTVAYDTYYAMTDREDDLKIGVKSTAILFGAADRAIILALQGLTLGLLLVVGMRLGLGPYFHLGLLVAALCFAWEFVTTRRREPQACFRAFLHNHWAGLAILVGLILDYGI.

8 helical membrane passes run P28–G48, V55–F75, W103–F123, L147–A167, A175–M195, A219–L239, L241–V261, and F275–I295.

It belongs to the UbiA prenyltransferase family. It depends on Mg(2+) as a cofactor.

The protein localises to the cell inner membrane. It catalyses the reaction all-trans-octaprenyl diphosphate + 4-hydroxybenzoate = 4-hydroxy-3-(all-trans-octaprenyl)benzoate + diphosphate. It participates in cofactor biosynthesis; ubiquinone biosynthesis. Catalyzes the prenylation of para-hydroxybenzoate (PHB) with an all-trans polyprenyl group. Mediates the second step in the final reaction sequence of ubiquinone-8 (UQ-8) biosynthesis, which is the condensation of the polyisoprenoid side chain with PHB, generating the first membrane-bound Q intermediate 3-octaprenyl-4-hydroxybenzoate. The sequence is that of 4-hydroxybenzoate octaprenyltransferase from Azotobacter vinelandii (strain DJ / ATCC BAA-1303).